The primary structure comprises 472 residues: Sarcalumenin (472 aa).

The N-terminal stretch at M1 to A20 is a signal peptide. N-linked (GlcNAc...) asparagine glycosylation is present at L59. The region spanning I89–A330 is the Dynamin-type G domain. Positions G99–S106 are G1 motif. A G2 motif region spans residues E127 to P128. The G3 motif stretch occupies residues D189 to G192. Positions N254–D257 are G4 motif. Position 278 (L278) is a region of interest, G5 motif. N280 and N388 each carry an N-linked (GlcNAc...) asparagine glycan.

The protein belongs to the TRAFAC class dynamin-like GTPase superfamily. Dynamin/Fzo/YdjA family. N-glycosylated.

It is found in the sarcoplasmic reticulum lumen. It localises to the sarcoplasmic reticulum membrane. The polypeptide is Sarcalumenin (SRL) (Gallus gallus (Chicken)).